A 163-amino-acid chain; its full sequence is Pheromone-binding protein 1 (163 aa).

Residues 1–21 form the signal peptide; sequence MLGKISLLLLPVFVAINLVHS. 3 disulfide bridges follow: cysteine 40-cysteine 75, cysteine 71-cysteine 129, and cysteine 118-cysteine 138.

This sequence belongs to the PBP/GOBP family. Antenna.

In terms of biological role, this major soluble protein in olfactory sensilla of male moths might serve to solubilize the extremely hydrophobic pheromone molecules and to transport pheromone through the aqueous lymph to receptors located on olfactory cilia. This Antheraea pernyi (Chinese oak silk moth) protein is Pheromone-binding protein 1.